The sequence spans 179 residues: Large ribosomal subunit protein uL6 (179 aa).

This sequence belongs to the universal ribosomal protein uL6 family. In terms of assembly, part of the 50S ribosomal subunit.

Its function is as follows. This protein binds to the 23S rRNA, and is important in its secondary structure. It is located near the subunit interface in the base of the L7/L12 stalk, and near the tRNA binding site of the peptidyltransferase center. This chain is Large ribosomal subunit protein uL6, found in Desulfovibrio desulfuricans (strain ATCC 27774 / DSM 6949 / MB).